The chain runs to 295 residues: Acetylglutamate kinase (295 aa).

Substrate is bound by residues 66 to 67 (GG), arginine 88, and asparagine 193.

Belongs to the acetylglutamate kinase family. ArgB subfamily.

The protein resides in the cytoplasm. The catalysed reaction is N-acetyl-L-glutamate + ATP = N-acetyl-L-glutamyl 5-phosphate + ADP. The protein operates within amino-acid biosynthesis; L-arginine biosynthesis; N(2)-acetyl-L-ornithine from L-glutamate: step 2/4. Functionally, catalyzes the ATP-dependent phosphorylation of N-acetyl-L-glutamate. This chain is Acetylglutamate kinase, found in Gluconobacter oxydans (strain 621H) (Gluconobacter suboxydans).